We begin with the raw amino-acid sequence, 278 residues long: Large ribosomal subunit protein uL2 (278 aa).

Composition is skewed to basic residues over residues 210 to 219 (RKRWLGKRPQ) and 252 to 263 (KKSRGIKTRNSK). The interval 210 to 278 (RKRWLGKRPQ…LIIRHRKGNK (69 aa)) is disordered.

This sequence belongs to the universal ribosomal protein uL2 family. Part of the 50S ribosomal subunit. Forms a bridge to the 30S subunit in the 70S ribosome.

Its function is as follows. One of the primary rRNA binding proteins. Required for association of the 30S and 50S subunits to form the 70S ribosome, for tRNA binding and peptide bond formation. It has been suggested to have peptidyltransferase activity; this is somewhat controversial. Makes several contacts with the 16S rRNA in the 70S ribosome. The polypeptide is Large ribosomal subunit protein uL2 (Lactobacillus gasseri (strain ATCC 33323 / DSM 20243 / BCRC 14619 / CIP 102991 / JCM 1131 / KCTC 3163 / NCIMB 11718 / NCTC 13722 / AM63)).